A 271-amino-acid chain; its full sequence is Glutamate racemase (271 aa).

Residues 10–11 (DS) and 42–43 (YG) contribute to the substrate site. Cysteine 74 serves as the catalytic Proton donor/acceptor. 75–76 (NT) serves as a coordination point for substrate. Cysteine 189 acts as the Proton donor/acceptor in catalysis. 190–191 (TH) contacts substrate.

Belongs to the aspartate/glutamate racemases family.

The catalysed reaction is L-glutamate = D-glutamate. The protein operates within cell wall biogenesis; peptidoglycan biosynthesis. Its function is as follows. Provides the (R)-glutamate required for cell wall biosynthesis. The chain is Glutamate racemase from Bartonella bacilliformis (strain ATCC 35685 / KC583 / Herrer 020/F12,63).